The chain runs to 103 residues: Large ribosomal subunit protein uL24 (103 aa).

Belongs to the universal ribosomal protein uL24 family. In terms of assembly, part of the 50S ribosomal subunit.

Functionally, one of two assembly initiator proteins, it binds directly to the 5'-end of the 23S rRNA, where it nucleates assembly of the 50S subunit. In terms of biological role, one of the proteins that surrounds the polypeptide exit tunnel on the outside of the subunit. The chain is Large ribosomal subunit protein uL24 from Actinobacillus pleuropneumoniae serotype 5b (strain L20).